The following is a 201-amino-acid chain: Sterile alpha motif domain-containing protein 12 (201 aa).

In terms of domain architecture, SAM spans 77–143 (WTQQDVCKWL…LQQVLQLKVR (67 aa)).

Expressed in the brain.

The protein is Sterile alpha motif domain-containing protein 12 (SAMD12) of Homo sapiens (Human).